The chain runs to 436 residues: Serine hydroxymethyltransferase (436 aa).

(6S)-5,6,7,8-tetrahydrofolate contacts are provided by residues L133 and 137 to 139; that span reads GHI. K242 is modified (N6-(pyridoxal phosphate)lysine).

It belongs to the SHMT family. As to quaternary structure, homodimer. Pyridoxal 5'-phosphate serves as cofactor.

It localises to the cytoplasm. The enzyme catalyses (6R)-5,10-methylene-5,6,7,8-tetrahydrofolate + glycine + H2O = (6S)-5,6,7,8-tetrahydrofolate + L-serine. The protein operates within one-carbon metabolism; tetrahydrofolate interconversion. It functions in the pathway amino-acid biosynthesis; glycine biosynthesis; glycine from L-serine: step 1/1. Catalyzes the reversible interconversion of serine and glycine with tetrahydrofolate (THF) serving as the one-carbon carrier. This reaction serves as the major source of one-carbon groups required for the biosynthesis of purines, thymidylate, methionine, and other important biomolecules. Also exhibits THF-independent aldolase activity toward beta-hydroxyamino acids, producing glycine and aldehydes, via a retro-aldol mechanism. This chain is Serine hydroxymethyltransferase, found in Pelagibacter ubique (strain HTCC1062).